Consider the following 337-residue polypeptide: Methylthioribose-1-phosphate isomerase (337 aa).

Residues 47–49 (RGA), R81, and Q184 each bind substrate. The active-site Proton donor is the D225. Position 235–236 (235–236 (NK)) interacts with substrate.

The protein belongs to the eIF-2B alpha/beta/delta subunits family. MtnA subfamily.

It carries out the reaction 5-(methylsulfanyl)-alpha-D-ribose 1-phosphate = 5-(methylsulfanyl)-D-ribulose 1-phosphate. The protein operates within amino-acid biosynthesis; L-methionine biosynthesis via salvage pathway; L-methionine from S-methyl-5-thio-alpha-D-ribose 1-phosphate: step 1/6. Its function is as follows. Catalyzes the interconversion of methylthioribose-1-phosphate (MTR-1-P) into methylthioribulose-1-phosphate (MTRu-1-P). This is Methylthioribose-1-phosphate isomerase from Synechococcus sp. (strain CC9605).